Here is a 323-residue protein sequence, read N- to C-terminus: Serine/threonine-protein phosphatase PP1-gamma catalytic subunit (323 aa).

Residues D64, H66, D92, and N124 each contribute to the Mn(2+) site. H125 functions as the Proton donor in the catalytic mechanism. Residues H173 and H248 each coordinate Mn(2+). The segment at 300-323 (EKKKPNASRPVTPPRGMITKQAKK) is disordered.

The protein belongs to the PPP phosphatase family. PP-1 subfamily. In terms of assembly, PP1 comprises a catalytic subunit, ppp1c1, ppp1cb or ppp1cc, which is folded into its native form by inhibitor 2 and glycogen synthetase kinase 3, and then is complexed to one or several targeting or regulatory subunits. Mn(2+) serves as cofactor.

The protein localises to the cytoplasm. It localises to the nucleus. The protein resides in the cleavage furrow. Its subcellular location is the nucleolus. It is found in the nucleoplasm. The protein localises to the chromosome. It localises to the centromere. The protein resides in the kinetochore. Its subcellular location is the nucleus speckle. It is found in the midbody. The protein localises to the mitochondrion. It localises to the cytoskeleton. The protein resides in the microtubule organizing center. It carries out the reaction O-phospho-L-seryl-[protein] + H2O = L-seryl-[protein] + phosphate. It catalyses the reaction O-phospho-L-threonyl-[protein] + H2O = L-threonyl-[protein] + phosphate. Protein phosphatase 1 (PP1) is essential for cell division, and participates in the regulation of glycogen metabolism, muscle contractility and protein synthesis. Promotes nuclear envelope reassembly by targeting nuclear membrane vesicles to chromatin at the end of mitosis. Acts by dephosphorylating membrane proteins such as lamin B receptor (lbr) to regulate the binding of membrane proteins to chromatin. The polypeptide is Serine/threonine-protein phosphatase PP1-gamma catalytic subunit (Xenopus tropicalis (Western clawed frog)).